A 169-amino-acid chain; its full sequence is Putative phosphoesterase SSP1770 (169 aa).

H34 serves as the catalytic Proton donor. 2 consecutive short sequence motifs (HXTX) follow at residues 34 to 37 (HITI) and 115 to 118 (HFTI). H115 (proton acceptor) is an active-site residue.

The protein belongs to the 2H phosphoesterase superfamily. YjcG family.

The protein is Putative phosphoesterase SSP1770 of Staphylococcus saprophyticus subsp. saprophyticus (strain ATCC 15305 / DSM 20229 / NCIMB 8711 / NCTC 7292 / S-41).